The primary structure comprises 332 residues: MQTILEKLYRSESMNQQESQQLFSAIVRGELEPSQLAAALISMKIRGEHPEEIAGAAKALLADALPFPRPDYPFADIVGTGGDGTNSINISTASAFVAAACGAKVAKHGNRSVSSRSGSSDLLAAFGIRLDLPAEEARKALDELGVCFLFAPQYHTGFRHAMPVRQQLKTRTVFNVLGPLINPARPPLALIGVYSPELVLPIAETLRVLGYQRAAVVHGGGMDEVAIHATTHVAELNNGEIESYQLTPQSFGLQSYPLEALLGGSPEENRDILARLLQGKGDPAHAAAVAANVALLLKLFGHEDLRQNAQQALDMIHSGQAYERVTALAARG.

Residues Gly-79, 82–83, Ser-87, 89–92, 107–115, and Ser-119 each bind 5-phospho-alpha-D-ribose 1-diphosphate; these read GD, NIST, and KHGNRSVSS. Gly-79 lines the anthranilate pocket. Position 91 (Ser-91) interacts with Mg(2+). Asn-110 provides a ligand contact to anthranilate. Residue Arg-165 coordinates anthranilate. The Mg(2+) site is built by Asp-223 and Glu-224.

The protein belongs to the anthranilate phosphoribosyltransferase family. In terms of assembly, homodimer. Mg(2+) serves as cofactor.

The enzyme catalyses N-(5-phospho-beta-D-ribosyl)anthranilate + diphosphate = 5-phospho-alpha-D-ribose 1-diphosphate + anthranilate. It participates in amino-acid biosynthesis; L-tryptophan biosynthesis; L-tryptophan from chorismate: step 2/5. In terms of biological role, catalyzes the transfer of the phosphoribosyl group of 5-phosphorylribose-1-pyrophosphate (PRPP) to anthranilate to yield N-(5'-phosphoribosyl)-anthranilate (PRA). The protein is Anthranilate phosphoribosyltransferase of Serratia proteamaculans (strain 568).